The following is a 954-amino-acid chain: SWI/SNF-related matrix-associated actin-dependent regulator of chromatin subfamily A-like protein 1 (954 aa).

2 disordered regions span residues methionine 1–alanine 20 and lysine 27–lysine 238. The residue at position 2 (serine 2) is an N-acetylserine. Residues leucine 3 to glutamine 34 are a coiled coil. The interval leucine 5 to alanine 30 is mediates interaction with RPA2. The segment covering glutamate 7 to alanine 20 has biased composition (basic and acidic residues). The segment covering lysine 72–aspartate 83 has biased composition (polar residues). Residues serine 112, serine 123, serine 129, and serine 151 each carry the phosphoserine modification. Composition is skewed to polar residues over residues lysine 171 to glutamine 183 and alanine 197 to lysine 238. Serine 198 bears the Phosphoserine mark. HARP domains lie at serine 226–glutamate 303 and serine 327–proline 398. A Helicase ATP-binding domain is found at asparagine 445–threonine 600. Position 458 to 465 (aspartate 458 to threonine 465) interacts with ATP. A DESH box motif is present at residues aspartate 549 to histidine 552. A Nuclear localization signal motif is present at residues arginine 644–isoleucine 661. One can recognise a Helicase C-terminal domain in the interval tyrosine 716–serine 869. The segment at glutamate 904–serine 934 is disordered. Positions glycine 909 to serine 919 are enriched in low complexity. Positions glutamine 920 to serine 934 are enriched in polar residues.

This sequence belongs to the SNF2/RAD54 helicase family. SMARCAL1 subfamily. As to quaternary structure, interacts with RPA2; the interaction is direct and mediates the recruitment by the RPA complex of SMARCAL1 to sites of DNA damage. DNA damage-regulated phosphorylation by kinases that may include ATM, ATR and PRKDC. Ubiquitously expressed, with high levels in testis.

The protein localises to the nucleus. It catalyses the reaction ATP + H2O = ADP + phosphate + H(+). Its function is as follows. ATP-dependent annealing helicase that binds selectively to fork DNA relative to ssDNA or dsDNA and catalyzes the rewinding of the stably unwound DNA. Rewinds single-stranded DNA bubbles that are stably bound by replication protein A (RPA). Acts throughout the genome to reanneal stably unwound DNA, performing the opposite reaction of many enzymes, such as helicases and polymerases, that unwind DNA. May play an important role in DNA damage response by acting at stalled replication forks. The polypeptide is SWI/SNF-related matrix-associated actin-dependent regulator of chromatin subfamily A-like protein 1 (Homo sapiens (Human)).